The primary structure comprises 276 residues: Homeobox protein TOS8 (276 aa).

The span at 176–185 (NSVRGSNNGY) shows a compositional bias: polar residues. A disordered region spans residues 176–199 (NSVRGSNNGYSAKEKKHKAHGKRS). Residues 189–199 (EKKHKAHGKRS) show a composition bias toward basic residues. The segment at residues 194 to 256 (AHGKRSNLPK…NARRRKIFSG (63 aa)) is a DNA-binding region (homeobox; TALE-type).

This sequence belongs to the TALE/CUP9 homeobox family.

Its subcellular location is the nucleus. The polypeptide is Homeobox protein TOS8 (TOS8) (Saccharomyces cerevisiae (strain ATCC 204508 / S288c) (Baker's yeast)).